Reading from the N-terminus, the 555-residue chain is Vacuolar fusion protein MON1 homolog A (555 aa).

A compositionally biased stretch (basic and acidic residues) spans 1-12 (MAADMQRKRSSE). Positions 1–90 (MAADMQRKRS…PPLATDMRQI (90 aa)) are disordered. Residues Ser-31 and Ser-56 each carry the phosphoserine modification. Thr-61 carries the phosphothreonine modification. Ser-91 is modified (phosphoserine). Residues 112–149 (MLPGSSEDWPESPGAARRPATEPPRDGAGEGDEEEAAE) are disordered. Basic and acidic residues predominate over residues 130–139 (PATEPPRDGA).

It belongs to the MON1/SAND family. As to quaternary structure, interacts with CCZ1. Found in a complex with RMC1, CCZ1, MON1A and MON1B. The MON1A-CCZ1B complex interacts with RIMOC1. The MON1A-CCZ1B complex interacts with RAB7A and this interaction is enhanced in the presence of RIMOC1.

In terms of biological role, plays an important role in membrane trafficking through the secretory apparatus. Not involved in endocytic trafficking to lysosomes. Acts in concert with CCZ1, as a guanine exchange factor (GEF) for RAB7, promotes the exchange of GDP to GTP, converting it from an inactive GDP-bound form into an active GTP-bound form. The protein is Vacuolar fusion protein MON1 homolog A (MON1A) of Bos taurus (Bovine).